Consider the following 156-residue polypeptide: Large ribosomal subunit protein uL22 (156 aa).

This sequence belongs to the universal ribosomal protein uL22 family. In terms of assembly, part of the 50S ribosomal subunit.

In terms of biological role, this protein binds specifically to 23S rRNA. It makes multiple contacts with different domains of the 23S rRNA in the assembled 50S subunit and ribosome. Functionally, the globular domain of the protein is located near the polypeptide exit tunnel on the outside of the subunit, while an extended beta-hairpin is found that lines the wall of the exit tunnel in the center of the 70S ribosome. This is Large ribosomal subunit protein uL22 from Sulfolobus acidocaldarius (strain ATCC 33909 / DSM 639 / JCM 8929 / NBRC 15157 / NCIMB 11770).